The following is a 298-amino-acid chain: Ribosomal RNA processing protein 36 homolog (298 aa).

The interval 1–131 is disordered; sequence MKPDIIKKRR…SDAPVEMTAM (131 aa). Residues 14–56 are compositionally biased toward acidic residues; it reads SDDEDEYNEEDEMYEDDNNNYEEDEDDDDDDDEDDEDDDENEE. Composition is skewed to polar residues over residues 61–70 and 83–92; these read QQLSNVSFSS and LNLNTITKNL. Coiled coils occupy residues 88–112 and 196–228; these read ITKN…MNSK and RERD…KNKL. Residues 98–111 are compositionally biased toward basic and acidic residues; the sequence is FKKEEQQEKEEMNS. The interval 279–298 is disordered; it reads ISSKEKTFLPQRRSFDQDEN.

The protein belongs to the RRP36 family.

It is found in the nucleus. The protein localises to the nucleolus. Involved in the early processing steps of the pre-rRNA in the maturation pathway leading to the 18S rRNA. This Dictyostelium discoideum (Social amoeba) protein is Ribosomal RNA processing protein 36 homolog.